The chain runs to 441 residues: Ribosomal protein uS12 methylthiotransferase RimO (441 aa).

Residues 8-118 (PKIGFVSLGC…VLEHVHHYVP (111 aa)) enclose the MTTase N-terminal domain. Residues cysteine 17, cysteine 53, cysteine 82, cysteine 150, cysteine 154, and cysteine 157 each contribute to the [4Fe-4S] cluster site. One can recognise a Radical SAM core domain in the interval 136–373 (LTPRHYAYLK…MQLQQQISAE (238 aa)). One can recognise a TRAM domain in the interval 376–441 (QEKVGREILV…DEYDLWGSRV (66 aa)).

This sequence belongs to the methylthiotransferase family. RimO subfamily. [4Fe-4S] cluster serves as cofactor.

It is found in the cytoplasm. The enzyme catalyses L-aspartate(89)-[ribosomal protein uS12]-hydrogen + (sulfur carrier)-SH + AH2 + 2 S-adenosyl-L-methionine = 3-methylsulfanyl-L-aspartate(89)-[ribosomal protein uS12]-hydrogen + (sulfur carrier)-H + 5'-deoxyadenosine + L-methionine + A + S-adenosyl-L-homocysteine + 2 H(+). Catalyzes the methylthiolation of an aspartic acid residue of ribosomal protein uS12. The protein is Ribosomal protein uS12 methylthiotransferase RimO of Shigella flexneri.